The following is a 595-amino-acid chain: Aspartate--tRNA ligase (595 aa).

E171 is a binding site for L-aspartate. Positions 195 to 198 are aspartate; the sequence is QLFK. R217 serves as a coordination point for L-aspartate. Residues 217–219 and Q226 each bind ATP; that span reads RDE. H448 contacts L-aspartate. Residue E482 coordinates ATP. Residue R489 coordinates L-aspartate. 534–537 contacts ATP; that stretch reads GLDR.

This sequence belongs to the class-II aminoacyl-tRNA synthetase family. Type 1 subfamily. As to quaternary structure, homodimer.

It is found in the cytoplasm. The catalysed reaction is tRNA(Asp) + L-aspartate + ATP = L-aspartyl-tRNA(Asp) + AMP + diphosphate. Functionally, catalyzes the attachment of L-aspartate to tRNA(Asp) in a two-step reaction: L-aspartate is first activated by ATP to form Asp-AMP and then transferred to the acceptor end of tRNA(Asp). The sequence is that of Aspartate--tRNA ligase from Erwinia tasmaniensis (strain DSM 17950 / CFBP 7177 / CIP 109463 / NCPPB 4357 / Et1/99).